The sequence spans 440 residues: Xylose isomerase (440 aa).

Residues His100 and Asp103 contribute to the active site. Mg(2+) is bound by residues Glu231, Glu267, His270, Asp295, Asp306, Asp308, and Asp338.

This sequence belongs to the xylose isomerase family. Homotetramer. The cofactor is Mg(2+).

Its subcellular location is the cytoplasm. It catalyses the reaction alpha-D-xylose = alpha-D-xylulofuranose. In Burkholderia ambifaria (strain MC40-6), this protein is Xylose isomerase.